We begin with the raw amino-acid sequence, 160 residues long: Cyclic pyranopterin monophosphate synthase (160 aa).

Substrate is bound by residues 76 to 78 (LCH) and 114 to 115 (ME). D129 is an active-site residue.

It belongs to the MoaC family. Homohexamer; trimer of dimers.

It catalyses the reaction (8S)-3',8-cyclo-7,8-dihydroguanosine 5'-triphosphate = cyclic pyranopterin phosphate + diphosphate. The protein operates within cofactor biosynthesis; molybdopterin biosynthesis. Functionally, catalyzes the conversion of (8S)-3',8-cyclo-7,8-dihydroguanosine 5'-triphosphate to cyclic pyranopterin monophosphate (cPMP). The polypeptide is Cyclic pyranopterin monophosphate synthase (Vibrio cholerae serotype O1 (strain ATCC 39541 / Classical Ogawa 395 / O395)).